The primary structure comprises 261 residues: Kallikrein-1 (261 aa).

An N-terminal signal peptide occupies residues 1–18; it reads MWFLILFLALSLGRNDAA. Residues 19–24 constitute a propeptide, activation peptide; sequence PPVQSR. Positions 25 to 258 constitute a Peptidase S1 domain; that stretch reads VVGGYNCEMN…FTPWIKEVMK (234 aa). 5 disulfide bridges follow: Cys31–Cys173, Cys50–Cys66, Cys152–Cys219, Cys184–Cys198, and Cys209–Cys234. His65 functions as the Charge relay system in the catalytic mechanism. N-linked (GlcNAc...) asparagine glycosylation is present at Asn108. Asp120 acts as the Charge relay system in catalysis. Ser213 (charge relay system) is an active-site residue.

This sequence belongs to the peptidase S1 family. Kallikrein subfamily. In terms of tissue distribution, high levels in pancreas, submaxillary and parotid glands, spleen, and kidney.

The catalysed reaction is Preferential cleavage of Arg-|-Xaa bonds in small molecule substrates. Highly selective action to release kallidin (lysyl-bradykinin) from kininogen involves hydrolysis of Met-|-Xaa or Leu-|-Xaa.. This chain is Kallikrein-1 (Ngfg), found in Rattus norvegicus (Rat).